The following is a 152-amino-acid chain: Cell division protein SepF (152 aa).

Positions 21–56 are disordered; sequence EYIETEQDHPEEHEQQKDKQPAYAQKPQGKQNVVSL. Over residues 26–40 the composition is skewed to basic and acidic residues; that stretch reads EQDHPEEHEQQKDKQ.

It belongs to the SepF family. Homodimer. Interacts with FtsZ.

Its subcellular location is the cytoplasm. In terms of biological role, cell division protein that is part of the divisome complex and is recruited early to the Z-ring. Probably stimulates Z-ring formation, perhaps through the cross-linking of FtsZ protofilaments. Its function overlaps with FtsA. The polypeptide is Cell division protein SepF (Bacillus velezensis (strain DSM 23117 / BGSC 10A6 / LMG 26770 / FZB42) (Bacillus amyloliquefaciens subsp. plantarum)).